The following is a 330-amino-acid chain: Glycine betaine/proline betaine-binding periplasmic protein (330 aa).

Residues 1–21 (MRHSVLFATAFATLISTQTFA) form the signal peptide. Residues Trp86, His90, and 161–163 (WGC) each bind substrate. An intrachain disulfide couples Cys157 to Cys163.

In terms of assembly, the complex is composed of two ATP-binding proteins (ProV), two transmembrane proteins (ProW) and a solute-binding protein (ProX).

It is found in the periplasm. Functionally, part of the ProU ABC transporter complex involved in glycine betaine and proline betaine uptake. Binds glycine betaine and proline betaine with high affinity. The chain is Glycine betaine/proline betaine-binding periplasmic protein from Escherichia coli (strain K12).